The following is a 1452-amino-acid chain: Pleiotropic drug resistance protein 1 (1452 aa).

Residues Leu152–Glu425 form the ABC transporter 1 domain. Gly185–Thr192 provides a ligand contact to ATP. The region spanning Leu504–Phe716 is the ABC transmembrane type-2 1 domain. 7 consecutive transmembrane segments (helical) span residues Phe521–Phe541, Gly554–Ser574, Ile609–Phe629, Leu640–Leu660, Ile664–Phe684, Trp694–Asn714, and Ile753–Leu773. A disordered region spans residues Leu808–Ser830. Over residues Ser812–Arg821 the composition is skewed to basic and acidic residues. The ABC transporter 2 domain occupies Ile855–Asp1107. An ATP-binding site is contributed by Gly900 to Thr907. The ABC transmembrane type-2 2 domain occupies Thr1180–Phe1394. 7 helical membrane-spanning segments follow: residues Tyr1199–Trp1219, Tyr1239–Ile1259, Leu1287–Phe1307, Phe1314–Met1334, Ile1344–Val1364, Trp1375–Gly1395, and Phe1421–Ala1441.

The protein belongs to the ABC transporter superfamily. ABCG family. PDR (TC 3.A.1.205) subfamily. As to expression, expressed in root hypodermal passage cells. Expressed in stem tissues, particularly the vasculature and nodes adjacent to leaf axils.

The protein localises to the cell membrane. Its function is as follows. Cellular strigolactone (SL) transporter required for the exudation of SL from the root to the soil. The presence of SL in the vicinity of the roots is required for development of symbiotic interactions with arbuscular mycorrhizal fungi (AMF). Transports SL in the above ground tissues and is required for the control of shoot branching. SL regulates plant shoot architecture by inhibiting the outgrowth of axillary buds. Involved in the regulation of shootward and outward directional strigolactone transport in roots. Due to its polar localization in root cells, mediates directional shootward strigolactone transport, as well as localized outward directional transport for exudation to the soil. The chain is Pleiotropic drug resistance protein 1 from Petunia hybrida (Petunia).